We begin with the raw amino-acid sequence, 474 residues long: Methylenetetrahydrofolate--tRNA-(uracil-5-)-methyltransferase TrmFO (474 aa).

Position 9-14 (9-14 (GGGLAG)) interacts with FAD.

It belongs to the MnmG family. TrmFO subfamily. It depends on FAD as a cofactor.

Its subcellular location is the cytoplasm. The catalysed reaction is uridine(54) in tRNA + (6R)-5,10-methylene-5,6,7,8-tetrahydrofolate + NADH + H(+) = 5-methyluridine(54) in tRNA + (6S)-5,6,7,8-tetrahydrofolate + NAD(+). It carries out the reaction uridine(54) in tRNA + (6R)-5,10-methylene-5,6,7,8-tetrahydrofolate + NADPH + H(+) = 5-methyluridine(54) in tRNA + (6S)-5,6,7,8-tetrahydrofolate + NADP(+). In terms of biological role, catalyzes the folate-dependent formation of 5-methyl-uridine at position 54 (M-5-U54) in all tRNAs. The sequence is that of Methylenetetrahydrofolate--tRNA-(uracil-5-)-methyltransferase TrmFO from Methylorubrum extorquens (strain PA1) (Methylobacterium extorquens).